A 201-amino-acid chain; its full sequence is LIM domain-containing protein PLIM2b (201 aa).

LIM zinc-binding domains lie at 8–68 (DKCT…LFKE) and 103–163 (DKCA…LFME). A disordered region spans residues 171 to 201 (KKKSESQEVLPEVVPEEQPAPPPPDENREDN). Positions 177 to 187 (QEVLPEVVPEE) are enriched in low complexity.

Interacts with NEK3.

The chain is LIM domain-containing protein PLIM2b from Oryza sativa subsp. japonica (Rice).